The sequence spans 176 residues: Inner membrane-spanning protein YciB (176 aa).

Helical transmembrane passes span 3-23 (FLFD…WGIF), 49-69 (TMLW…LVLH), 72-92 (KFIQ…LVAA), 118-138 (KLNL…LYVV), and 149-169 (FKLF…SLWL).

It belongs to the YciB family.

Its subcellular location is the cell inner membrane. In terms of biological role, plays a role in cell envelope biogenesis, maintenance of cell envelope integrity and membrane homeostasis. This Burkholderia thailandensis (strain ATCC 700388 / DSM 13276 / CCUG 48851 / CIP 106301 / E264) protein is Inner membrane-spanning protein YciB.